The primary structure comprises 91 residues: Hepcidin-2 (91 aa).

Residues 1–24 (MKLSNVFLAAVVILTCVCVFQITA) form the signal peptide. A propeptide spanning residues 25 to 64 (VPFIQQVQDEHHVESEELQENQHLTEAEHRLTDPLVLFRT) is cleaved from the precursor. 4 cysteine pairs are disulfide-bonded: cysteine 73–cysteine 89, cysteine 76–cysteine 79, cysteine 77–cysteine 85, and cysteine 80–cysteine 88.

The protein belongs to the hepcidin family.

It localises to the secreted. In terms of biological role, seems to act as a signaling molecule involved in the maintenance of iron homeostasis. Seems to be required in conjunction with HFE to regulate both intestinal iron absorption and iron storage in macrophages. May also have antimicrobial activity. The protein is Hepcidin-2 (hamp2) of Danio rerio (Zebrafish).